We begin with the raw amino-acid sequence, 215 residues long: Chaperone protein TorD (215 aa).

This sequence belongs to the TorD/DmsD family. TorD subfamily.

It localises to the cytoplasm. Involved in the biogenesis of TorA. Acts on TorA before the insertion of the molybdenum cofactor and, as a result, probably favors a conformation of the apoenzyme that is competent for acquiring the cofactor. This is Chaperone protein TorD from Vibrio vulnificus (strain CMCP6).